The following is a 613-amino-acid chain: Envelope glycoprotein gp95 (613 aa).

A signal peptide spans Met1–Ala62. Residues Gly14 to Thr36 are disordered. Residues Asp63 to Leu559 lie on the Extracellular side of the membrane. 7 cysteine pairs are disulfide-bonded: Cys87–Cys506, Cys121–Cys151, Cys191–Cys252, Cys265–Cys275, Cys360–Cys377, Cys417–Cys453, and Cys498–Cys505. 11 N-linked (GlcNAc...) asparagine; by host glycosylation sites follow: Asn120, Asn140, Asn157, Asn177, Asn230, Asn264, Asn271, Asn297, Asn303, Asn313, and Asn321. A binding to host receptor region spans residues Ile184–Lys233. Positions Met268 to Thr294 are binding to host receptor. Residues Asn388 and Asn398 are each glycosylated (N-linked (GlcNAc...) asparagine; by host). Positions Gly425–Leu445 are fusion peptide. N-linked (GlcNAc...) asparagine; by host glycosylation occurs at Asn460. The immunosuppression stretch occupies residues Leu481–Gly497. Asn508 is a glycosylation site (N-linked (GlcNAc...) asparagine; by host). A helical membrane pass occupies residues Leu560–Val580. Residues Cys572 and Cys575 are each lipidated (S-palmitoyl cysteine; by host). The Extracellular segment spans residues Cys581–Val613. The N-linked (GlcNAc...) asparagine; by host glycan is linked to Asn589.

This sequence belongs to the Alpharetroviruses envelope glycoprotein family. Heterodimer with the transmembrane protein. The mature envelope protein (Env) consists of a trimer of SU-TM heterodimers attached by a labile interchain disulfide bond. Interacts with the host cell entry receptor TVB-S3; this interaction allows the viral attachment. As to quaternary structure, heterodimer with the surface protein. The mature envelope protein (Env) consists of a trimer of SU-TM heterodimers attached by a labile interchain disulfide bond. Post-translationally, specific enzymatic cleavages in vivo yield mature proteins. Envelope glycoproteins are synthesized as an inactive precursor that is N-glycosylated and processed likely by host cell furin or by a furin-like protease in the Golgi to yield the mature SU and TM proteins. The cleavage site between SU and TM requires the minimal sequence [KR]-X-[KR]-R. The transmembrane protein is palmitoylated. Palmitoylation is necessary for glycoprotein function and infectivity.

It is found in the virion membrane. Its subcellular location is the host cell membrane. In terms of biological role, the surface protein (SU) attaches the virus to the host cell entry receptor TVB-S3/CAR1. This interaction triggers the refolding of the transmembrane protein (TM) thereby unmasking its fusion peptide and the formation of a reactive thiolate on Cys-100 to activate its fusogenic potential. Fusion occurs at the host cell plasma membrane. Its function is as follows. The transmembrane protein (TM) acts as a class I viral fusion protein. Under the current model, the protein has at least 3 conformational states: pre-fusion native state, pre-hairpin intermediate state, and post-fusion hairpin state. During viral and target cell membrane fusion, the coiled coil regions (heptad repeats) assume a trimer-of-hairpins structure, positioning the fusion peptide in close proximity to the C-terminal region of the ectodomain. The formation of this structure appears to drive apposition and subsequent fusion of viral and target cell membranes. Membranes fusion leads to delivery of the nucleocapsid into the cytoplasm. This Rous sarcoma virus subgroup B (strain Schmidt-Ruppin) (RSV-SR-B) protein is Envelope glycoprotein gp95 (env).